The following is a 258-amino-acid chain: Ribosomal RNA small subunit methyltransferase J (258 aa).

Residues 111-112 (RD), 127-128 (ER), and D179 contribute to the S-adenosyl-L-methionine site.

This sequence belongs to the methyltransferase superfamily. RsmJ family.

It localises to the cytoplasm. It carries out the reaction guanosine(1516) in 16S rRNA + S-adenosyl-L-methionine = N(2)-methylguanosine(1516) in 16S rRNA + S-adenosyl-L-homocysteine + H(+). Functionally, specifically methylates the guanosine in position 1516 of 16S rRNA. In Alteromonas mediterranea (strain DSM 17117 / CIP 110805 / LMG 28347 / Deep ecotype), this protein is Ribosomal RNA small subunit methyltransferase J.